A 430-amino-acid polypeptide reads, in one-letter code: UPF0597 protein CV_1824 (430 aa).

This sequence belongs to the UPF0597 family.

This chain is UPF0597 protein CV_1824, found in Chromobacterium violaceum (strain ATCC 12472 / DSM 30191 / JCM 1249 / CCUG 213 / NBRC 12614 / NCIMB 9131 / NCTC 9757 / MK).